The primary structure comprises 174 residues: FITAAFDIPQISTGDMLRAAIKAGTPLGLEAKKIIDEGGLVRDDIIIGMVKERIAQDDCKNGFLFDGFPRTLAQAEAMVEAGVDLDAVVEIDVPDSVIVDRMSGRRVHLASGRTYHVTYNPPKVEGKDDVTGEDLIQRDDDKEETVKKRLAVYHEQTEVLVDFYSKLEGEHAPK.

The segment at 12–41 (STGDMLRAAIKAGTPLGLEAKKIIDEGGLV) is NMP. Residues Thr-13, Arg-18, 39–41 (GLV), 67–70 (GFPR), and Gln-74 contribute to the AMP site. Residues 104–141 (GRRVHLASGRTYHVTYNPPKVEGKDDVTGEDLIQRDDD) are LID. ATP contacts are provided by residues Arg-105 and 114–115 (TY). AMP contacts are provided by Arg-138 and Arg-149.

The protein belongs to the adenylate kinase family. As to quaternary structure, monomer.

Its subcellular location is the cytoplasm. The catalysed reaction is AMP + ATP = 2 ADP. Its pathway is purine metabolism; AMP biosynthesis via salvage pathway; AMP from ADP: step 1/1. Catalyzes the reversible transfer of the terminal phosphate group between ATP and AMP. Plays an important role in cellular energy homeostasis and in adenine nucleotide metabolism. The protein is Adenylate kinase of Neisseria cinerea.